A 309-amino-acid polypeptide reads, in one-letter code: MMAAPVMADWRAALPEVRGRIGFDVPLGPVTWFRVGGPAEVMFRPADIEDLSRFLAALAPEVPVLPIGAASNLIVRDGGIAGVVVRLVRGFADIEVQPDGIVAGAAALDATIAEHAAAAGLTGLEFLSGIPGSLGGAVAMNAGAYGAEIRDVLDWAEIVGRDGTVARYAAGDLALTYRHARLPEGGIVVRARLHARPGEAAAIAARMADIRASREATQPVRARTGGSTFRNPEGDKAWRLIDEAGCRGLIHGGAQVSEKHCNFLINLGEATAADIEGLGETVRRRVRERTGVELIWEIRRVGLPCRGAA.

The region spanning 34 to 198 (RVGGPAEVMF…VRARLHARPG (165 aa)) is the FAD-binding PCMH-type domain. Residue arginine 178 is part of the active site. The active-site Proton donor is serine 227. Glutamate 297 is a catalytic residue.

Belongs to the MurB family. It depends on FAD as a cofactor.

The protein localises to the cytoplasm. It catalyses the reaction UDP-N-acetyl-alpha-D-muramate + NADP(+) = UDP-N-acetyl-3-O-(1-carboxyvinyl)-alpha-D-glucosamine + NADPH + H(+). It functions in the pathway cell wall biogenesis; peptidoglycan biosynthesis. In terms of biological role, cell wall formation. The protein is UDP-N-acetylenolpyruvoylglucosamine reductase of Acidiphilium cryptum (strain JF-5).